The primary structure comprises 485 residues: Cobyric acid synthase (485 aa).

In terms of domain architecture, GATase cobBQ-type spans 248 to 435 (VLKVVVPVLP…LHGLFESPDA (188 aa)). Residue C329 is the Nucleophile of the active site. H427 is an active-site residue.

It belongs to the CobB/CobQ family. CobQ subfamily.

Its pathway is cofactor biosynthesis; adenosylcobalamin biosynthesis. Functionally, catalyzes amidations at positions B, D, E, and G on adenosylcobyrinic A,C-diamide. NH(2) groups are provided by glutamine, and one molecule of ATP is hydrogenolyzed for each amidation. The sequence is that of Cobyric acid synthase from Stutzerimonas stutzeri (strain A1501) (Pseudomonas stutzeri).